The following is a 276-amino-acid chain: Krueppel homolog 2 (276 aa).

The segment at 1-37 (MSAPTDQPPRSEGAQTNSSERSSQQQEQPQQSQSQNV) is disordered. The span at 18-35 (SSERSSQQQEQPQQSQSQ) shows a compositional bias: low complexity. Ser-22 carries the phosphoserine modification. The next 3 helical transmembrane spans lie at 53–73 (ALWALRLLVIFFTVSYVLPIF), 125–145 (LIFFNIRPSLLVLIPVLLYSV), and 181–201 (ILKATAFCEIFIMPYAIVLAF).

It belongs to the PER33/POM33 family.

It localises to the membrane. Functionally, member of the dosage-dependent hierarchy effective upon white gene expression. The sequence is that of Krueppel homolog 2 (Kr-h2) from Drosophila melanogaster (Fruit fly).